Reading from the N-terminus, the 563-residue chain is Dihydroxy-acid dehydratase (563 aa).

Asp-79 serves as a coordination point for Mg(2+). Cys-120 is a [2Fe-2S] cluster binding site. Asp-121 and Lys-122 together coordinate Mg(2+). Position 122 is an N6-carboxylysine (Lys-122). Position 193 (Cys-193) interacts with [2Fe-2S] cluster. Glu-451 contributes to the Mg(2+) binding site. The Proton acceptor role is filled by Ser-477.

This sequence belongs to the IlvD/Edd family. Homodimer. It depends on [2Fe-2S] cluster as a cofactor. The cofactor is Mg(2+).

The enzyme catalyses (2R)-2,3-dihydroxy-3-methylbutanoate = 3-methyl-2-oxobutanoate + H2O. The catalysed reaction is (2R,3R)-2,3-dihydroxy-3-methylpentanoate = (S)-3-methyl-2-oxopentanoate + H2O. It participates in amino-acid biosynthesis; L-isoleucine biosynthesis; L-isoleucine from 2-oxobutanoate: step 3/4. Its pathway is amino-acid biosynthesis; L-valine biosynthesis; L-valine from pyruvate: step 3/4. Functionally, functions in the biosynthesis of branched-chain amino acids. Catalyzes the dehydration of (2R,3R)-2,3-dihydroxy-3-methylpentanoate (2,3-dihydroxy-3-methylvalerate) into 2-oxo-3-methylpentanoate (2-oxo-3-methylvalerate) and of (2R)-2,3-dihydroxy-3-methylbutanoate (2,3-dihydroxyisovalerate) into 2-oxo-3-methylbutanoate (2-oxoisovalerate), the penultimate precursor to L-isoleucine and L-valine, respectively. This Sulfurovum sp. (strain NBC37-1) protein is Dihydroxy-acid dehydratase.